Consider the following 296-residue polypeptide: Nucleotide-binding protein MGAS2096_Spy0550 (296 aa).

13 to 20 (GMSGAGKT) contacts ATP. A GTP-binding site is contributed by 63 to 66 (DMRS).

This sequence belongs to the RapZ-like family.

In terms of biological role, displays ATPase and GTPase activities. The sequence is that of Nucleotide-binding protein MGAS2096_Spy0550 from Streptococcus pyogenes serotype M12 (strain MGAS2096).